Here is a 291-residue protein sequence, read N- to C-terminus: Acetyl-coenzyme A carboxylase carboxyl transferase subunit beta (291 aa).

In terms of domain architecture, CoA carboxyltransferase N-terminal spans 34-291 (MWTKCSNCNN…LILHGVNKYE (258 aa)). C38, C41, C57, and C60 together coordinate Zn(2+). The C4-type zinc-finger motif lies at 38–60 (CSNCNNMIYYEDLENNKYVCTKC).

This sequence belongs to the AccD/PCCB family. In terms of assembly, acetyl-CoA carboxylase is a heterohexamer composed of biotin carboxyl carrier protein (AccB), biotin carboxylase (AccC) and two subunits each of ACCase subunit alpha (AccA) and ACCase subunit beta (AccD). Zn(2+) serves as cofactor.

It is found in the cytoplasm. The catalysed reaction is N(6)-carboxybiotinyl-L-lysyl-[protein] + acetyl-CoA = N(6)-biotinyl-L-lysyl-[protein] + malonyl-CoA. Its pathway is lipid metabolism; malonyl-CoA biosynthesis; malonyl-CoA from acetyl-CoA: step 1/1. In terms of biological role, component of the acetyl coenzyme A carboxylase (ACC) complex. Biotin carboxylase (BC) catalyzes the carboxylation of biotin on its carrier protein (BCCP) and then the CO(2) group is transferred by the transcarboxylase to acetyl-CoA to form malonyl-CoA. In Clostridium botulinum (strain Eklund 17B / Type B), this protein is Acetyl-coenzyme A carboxylase carboxyl transferase subunit beta.